Reading from the N-terminus, the 172-residue chain is Protein GrpE (172 aa).

The tract at residues 1 to 23 (MNQDHPECDSEELTQNSPETDPL) is disordered.

This sequence belongs to the GrpE family. In terms of assembly, homodimer.

The protein resides in the cytoplasm. Functionally, participates actively in the response to hyperosmotic and heat shock by preventing the aggregation of stress-denatured proteins, in association with DnaK and GrpE. It is the nucleotide exchange factor for DnaK and may function as a thermosensor. Unfolded proteins bind initially to DnaJ; upon interaction with the DnaJ-bound protein, DnaK hydrolyzes its bound ATP, resulting in the formation of a stable complex. GrpE releases ADP from DnaK; ATP binding to DnaK triggers the release of the substrate protein, thus completing the reaction cycle. Several rounds of ATP-dependent interactions between DnaJ, DnaK and GrpE are required for fully efficient folding. The chain is Protein GrpE from Xylella fastidiosa (strain 9a5c).